The following is a 363-amino-acid chain: Chorismate synthase (363 aa).

NADP(+)-binding residues include arginine 48 and arginine 54. FMN contacts are provided by residues 125–127 (RSS), 237–238 (NA), glycine 277, 292–296 (KPTSS), and arginine 318.

This sequence belongs to the chorismate synthase family. Homotetramer. Requires FMNH2 as cofactor.

The catalysed reaction is 5-O-(1-carboxyvinyl)-3-phosphoshikimate = chorismate + phosphate. Its pathway is metabolic intermediate biosynthesis; chorismate biosynthesis; chorismate from D-erythrose 4-phosphate and phosphoenolpyruvate: step 7/7. In terms of biological role, catalyzes the anti-1,4-elimination of the C-3 phosphate and the C-6 proR hydrogen from 5-enolpyruvylshikimate-3-phosphate (EPSP) to yield chorismate, which is the branch point compound that serves as the starting substrate for the three terminal pathways of aromatic amino acid biosynthesis. This reaction introduces a second double bond into the aromatic ring system. The chain is Chorismate synthase from Pseudomonas entomophila (strain L48).